The sequence spans 267 residues: Putative transcription factor Ovo-like 1 (267 aa).

4 C2H2-type zinc fingers span residues 118–140, 146–168, 174–197, and 213–235; these read FTCHICQKAFTYQRMLNRHMKCH, HLCTYCGKGFNDTFDLKRHVRTH, YKCSLCDKAFTQRCSLESHLKKIH, and YVCEECGCTSESQEGHVLHLKEH.

The protein localises to the nucleus. Functionally, putative transcription factor. Involved in hair formation and spermatogenesis. May function in the differentiation and/or maintenance of the urogenital system. This chain is Putative transcription factor Ovo-like 1 (OVOL1), found in Bos taurus (Bovine).